A 319-amino-acid chain; its full sequence is Cell surface A33 antigen (319 aa).

Residues 1–21 (MVGKMWPVLWTLCAVRVTVDA) form the signal peptide. The Ig-like V-type domain maps to 22 to 134 (ISVETPQDVL…LEGNTKSRVR (113 aa)). At 22 to 235 (ISVETPQDVL…VAVRSPSMNV (214 aa)) the chain is on the extracellular side. 3 disulfides stabilise this stretch: Cys-43/Cys-117, Cys-146/Cys-222, and Cys-162/Cys-211. Asn-112, Asn-200, and Asn-223 each carry an N-linked (GlcNAc...) asparagine glycan. The 88-residue stretch at 140–227 (PPSKPECGIE…GTQFCNITVA (88 aa)) folds into the Ig-like C2-type domain. A helical transmembrane segment spans residues 236–256 (ALYVGIAVGVVAALIIIGIII). Residues 257 to 319 (YCCCCRGKDD…GRESPDHLDQ (63 aa)) are Cytoplasmic-facing. Basic and acidic residues-rich tracts occupy residues 267–295 (NTED…SRER) and 303–319 (QEEQ…HLDQ). Positions 267 to 319 (NTEDKEDARPNREAYEEPPEQLRELSREREEEDDYRQEEQRSTGRESPDHLDQ) are disordered.

In terms of processing, N-glycosylated, contains approximately 8 kDa of N-linked carbohydrate. Post-translationally, palmitoylated. Expressed in normal gastrointestinal epithelium and in 95% of colon cancers.

It is found in the membrane. Functionally, may play a role in cell-cell recognition and signaling. The polypeptide is Cell surface A33 antigen (GPA33) (Homo sapiens (Human)).